Here is a 161-residue protein sequence, read N- to C-terminus: ATP synthase subunit b 1 (161 aa).

Residues 3-23 (LDATFYALVGLILFFVLIAYL) form a helical membrane-spanning segment.

The protein belongs to the ATPase B chain family. In terms of assembly, F-type ATPases have 2 components, F(1) - the catalytic core - and F(0) - the membrane proton channel. F(1) has five subunits: alpha(3), beta(3), gamma(1), delta(1), epsilon(1). F(0) has three main subunits: a(1), b(2) and c(10-14). The alpha and beta chains form an alternating ring which encloses part of the gamma chain. F(1) is attached to F(0) by a central stalk formed by the gamma and epsilon chains, while a peripheral stalk is formed by the delta and b chains.

Its subcellular location is the cell inner membrane. Functionally, f(1)F(0) ATP synthase produces ATP from ADP in the presence of a proton or sodium gradient. F-type ATPases consist of two structural domains, F(1) containing the extramembraneous catalytic core and F(0) containing the membrane proton channel, linked together by a central stalk and a peripheral stalk. During catalysis, ATP synthesis in the catalytic domain of F(1) is coupled via a rotary mechanism of the central stalk subunits to proton translocation. Component of the F(0) channel, it forms part of the peripheral stalk, linking F(1) to F(0). The sequence is that of ATP synthase subunit b 1 from Rhizobium meliloti (strain 1021) (Ensifer meliloti).